An 88-amino-acid polypeptide reads, in one-letter code: Apolipoprotein C-I (88 aa).

The first 26 residues, 1 to 26, serve as a signal peptide directing secretion; the sequence is MRLFIALPVLIVVVAMTLEGPAPAQA.

The protein belongs to the apolipoprotein C1 family. Adult and fetal liver.

The protein localises to the secreted. Inhibitor of lipoprotein binding to the low density lipoprotein (LDL) receptor, LDL receptor-related protein, and very low density lipoprotein (VLDL) receptor. Associates with high density lipoproteins (HDL) and the triacylglycerol-rich lipoproteins in the plasma and makes up about 10% of the protein of the VLDL and 2% of that of HDL. Appears to interfere directly with fatty acid uptake and is also the major plasma inhibitor of cholesteryl ester transfer protein (CETP). Modulates the interaction of APOE with beta-migrating VLDL and inhibits binding of beta-VLDL to the LDL receptor-related protein. Binds free fatty acids and reduces their intracellular esterification. This is Apolipoprotein C-I (Apoc1) from Mus musculus (Mouse).